Consider the following 175-residue polypeptide: Ribosome-binding factor A (175 aa).

The interval 125–175 (TAKHAGEADPYKSDAPEDVDIDEDDFDEEDIDLAGDDDIDEDANKDADSSK) is disordered. Positions 128–139 (HAGEADPYKSDA) are enriched in basic and acidic residues. A compositionally biased stretch (acidic residues) spans 140 to 165 (PEDVDIDEDDFDEEDIDLAGDDDIDE). Residues 166-175 (DANKDADSSK) show a composition bias toward basic and acidic residues.

Belongs to the RbfA family. Monomer. Binds 30S ribosomal subunits, but not 50S ribosomal subunits or 70S ribosomes.

The protein localises to the cytoplasm. One of several proteins that assist in the late maturation steps of the functional core of the 30S ribosomal subunit. Associates with free 30S ribosomal subunits (but not with 30S subunits that are part of 70S ribosomes or polysomes). Required for efficient processing of 16S rRNA. May interact with the 5'-terminal helix region of 16S rRNA. The sequence is that of Ribosome-binding factor A from Pseudarthrobacter chlorophenolicus (strain ATCC 700700 / DSM 12829 / CIP 107037 / JCM 12360 / KCTC 9906 / NCIMB 13794 / A6) (Arthrobacter chlorophenolicus).